A 194-amino-acid polypeptide reads, in one-letter code: MKKSLLTIVLAFSFVLGGAALAPTVSEAHGYVASPGSRAFFGSSAGGNLNTNVGRAQWEPQSIEAPKNTFITGKLASAGVSGFEPLDEQTATRWHKTNITTGPLDITWNLTAQHRTASWDYYITKNGWNPNQPLDIKNFDKIASIDGKQEVPNKVVKQTINIPTDRKGYHVIYAVWGIGDTVNAFYQAIDVNIQ.

An N-terminal signal peptide occupies residues 1 to 28; the sequence is MKKSLLTIVLAFSFVLGGAALAPTVSEA. Residues H29 and H114 each contribute to the Cu cation site. The 163-residue stretch at 29 to 191 folds into the Chitin-binding type-4 domain; the sequence is HGYVASPGSR…VNAFYQAIDV (163 aa).

Cu(2+) is required as a cofactor.

Its subcellular location is the secreted. It catalyses the reaction [(1-&gt;4)-N-acetyl-beta-D-glucosaminyl]n+m + reduced acceptor + O2 = [(1-&gt;4)-N-acetyl-beta-D-glucosaminyl]m-1-(1-&gt;4)-2-(acetylamino)-2-deoxy-D-glucono-1,5-lactone + [(1-&gt;4)-N-acetyl-beta-D-glucosaminyl]n + acceptor + H2O.. Its pathway is glycan degradation; chitin degradation. In terms of biological role, involved in chitin degradation. Catalyzes the oxidative cleavage of glycosidic bonds in both alpha- and beta-chitin via a copper-dependent mechanism, leading to oxidized chitooligosaccharides with a dominance of even-numbered products. Acts synergistically with the chitinase EfChi18A, and combining the two enzymes leads to rapid and complete depolymerization of crystalline chitin, especially with beta-chitin as a substrate. Is likely involved in a chitin degradation pathway that allows E.faecalis V583 to grow on chitin as a carbon source. The chain is Lytic chitin monooxygenase from Enterococcus faecalis (strain ATCC 700802 / V583).